We begin with the raw amino-acid sequence, 430 residues long: Trigger factor (430 aa).

In terms of domain architecture, PPIase FKBP-type spans 157–242; it reads GDLVALETWS…AVEVSEPVLP (86 aa).

Belongs to the FKBP-type PPIase family. Tig subfamily.

The protein localises to the cytoplasm. It carries out the reaction [protein]-peptidylproline (omega=180) = [protein]-peptidylproline (omega=0). In terms of biological role, involved in protein export. Acts as a chaperone by maintaining the newly synthesized protein in an open conformation. Functions as a peptidyl-prolyl cis-trans isomerase. This Xanthomonas oryzae pv. oryzae (strain PXO99A) protein is Trigger factor.